The primary structure comprises 212 residues: External core antigen (212 aa).

An N-terminal signal peptide occupies residues 1–19 (MQLFHLCLIISCSCPTVQA). The segment at 25–27 (GWL) is HBEAG. The segment at 165 to 212 (NAPILSTLPETTVVRRRGRSPRRRTPSPRRRRSQSPRRRRSQSRESQC) is disordered. A compositionally biased stretch (basic residues) spans 178–205 (VRRRGRSPRRRTPSPRRRRSQSPRRRRS). A 1; half-length repeat occupies 184–190 (SPRRRTP). The interval 184–206 (SPRRRTPSPRRRRSQSPRRRRSQ) is 3 X 8 AA repeats of S-P-R-R-R-R-S-Q. The propeptide occupies 184 to 212 (SPRRRTPSPRRRRSQSPRRRRSQSRESQC). 2 repeat units span residues 191–198 (SPRRRRSQ) and 199–206 (SPRRRRSQ).

Belongs to the orthohepadnavirus precore antigen family. Homodimerizes. In terms of processing, phosphorylated. Post-translationally, cleaved by host furin.

The protein resides in the secreted. The protein localises to the host nucleus. In terms of biological role, may regulate immune response to the intracellular capsid in acting as a T-cell tolerogen, by having an immunoregulatory effect which prevents destruction of infected cells by cytotoxic T-cells. This immune regulation may predispose to chronicity during perinatal infections and prevent severe liver injury during adult infections. The sequence is that of External core antigen from Hepatitis B virus genotype B2 (isolate Indonesia/pIDW420/1988) (HBV-B).